Reading from the N-terminus, the 365-residue chain is Quinone oxidoreductase-like protein 2 homolog (365 aa).

Belongs to the zinc-containing alcohol dehydrogenase family. Quinone oxidoreductase subfamily.

This is Quinone oxidoreductase-like protein 2 homolog from Nematostella vectensis (Starlet sea anemone).